The sequence spans 232 residues: Uracil phosphoribosyltransferase (232 aa).

38–42 (KGLVK) serves as a coordination point for GTP. 5-phospho-alpha-D-ribose 1-diphosphate is bound by residues arginine 87, arginine 112, and 140–148 (DPMIATGST). Residues isoleucine 204 and 209 to 211 (GDA) contribute to the uracil site. Position 210 (aspartate 210) interacts with 5-phospho-alpha-D-ribose 1-diphosphate.

The protein belongs to the UPRTase family. Mg(2+) is required as a cofactor.

It catalyses the reaction UMP + diphosphate = 5-phospho-alpha-D-ribose 1-diphosphate + uracil. Its pathway is pyrimidine metabolism; UMP biosynthesis via salvage pathway; UMP from uracil: step 1/1. With respect to regulation, allosterically activated by GTP. Catalyzes the conversion of uracil and 5-phospho-alpha-D-ribose 1-diphosphate (PRPP) to UMP and diphosphate. The chain is Uracil phosphoribosyltransferase from Thermococcus sibiricus (strain DSM 12597 / MM 739).